The primary structure comprises 310 residues: Keratin, type II cytoskeletal 8 (310 aa).

A disordered region spans residues 1 to 38 (QRTLKVSSSGPRSFSSRSFSSGPSSRISSSSYSRVGSN). Lys-5 is covalently cross-linked (Glycyl lysine isopeptide (Lys-Gly) (interchain with G-Cter in SUMO2)). Phosphoserine is present on residues Ser-7, Ser-9, Ser-15, and Ser-16. Residues 7-38 (SSSGPRSFSSRSFSSGPSSRISSSSYSRVGSN) are compositionally biased toward low complexity. At Arg-17 the chain carries Omega-N-methylarginine. Residues Ser-18, Ser-21, and Ser-25 each carry the phosphoserine modification. Residue Arg-26 is modified to Omega-N-methylarginine. Phosphoserine occurs at positions 28, 31, and 33. At Arg-34 the chain carries Omega-N-methylarginine. Ser-37 carries the post-translational modification Phosphoserine. Arg-42 bears the Asymmetric dimethylarginine; alternate mark. Arg-42 is subject to Omega-N-methylarginine; alternate. Residues 92 to 127 (EKEQIKTLNNKFASFIDKVRFLEQQNKILETKWSFL) form a coil 1A region. Residues 92 to 310 (EKEQIKTLNN…LRHTKTEISE (219 aa)) enclose the IF rod domain. Residue Lys-102 is modified to N6-malonyllysine. Residues Lys-123 and Lys-131 each participate in a glycyl lysine isopeptide (Lys-Gly) (interchain with G-Cter in SUMO2) cross-link. Residues 128 to 144 (QQQKTSQSNLDGLFEKY) form a linker 1 region. Residues 145–236 (ITNLRRQLDS…HLYEEEIKEM (92 aa)) are coil 1B. Lys-198 participates in a covalent cross-link: Glycyl lysine isopeptide (Lys-Gly) (interchain with G-Cter in SUMO1); alternate. Residue Lys-198 forms a Glycyl lysine isopeptide (Lys-Gly) (interchain with G-Cter in SUMO2); alternate linkage. An N6-acetyllysine modification is found at Lys-208. A Phosphotyrosine modification is found at Tyr-229. The segment at 237–260 (QSQISDTSVVVSMDNSRSLDLDGI) is linker 12. Residues Ser-254 and Ser-275 each carry the phosphoserine modification. The tract at residues 261–310 (IADVRAQYEEIANRSRAEAETMYQIKYEELQLLAGKHGDDLRHTKTEISE) is coil 2. A Glycyl lysine isopeptide (Lys-Gly) (interchain with G-Cter in SUMO2) cross-link involves residue Lys-286. Residue Lys-296 forms a Glycyl lysine isopeptide (Lys-Gly) (interchain with G-Cter in SUMO2); alternate linkage. The residue at position 296 (Lys-296) is an N6-acetyllysine; alternate. Lys-305 participates in a covalent cross-link: Glycyl lysine isopeptide (Lys-Gly) (interchain with G-Cter in SUMO2).

This sequence belongs to the intermediate filament family. As to quaternary structure, heterotetramer of two type I and two type II keratins. Forms a heterodimer with KRT18. Associates with KRT20. Interacts with PNN. When associated with KRT19, interacts with DMD. Interacts with APEX1. Interacts with GPER1. Interacts with EPPK1. Interacts with PKP1 and PKP2. O-glycosylated. O-GlcNAcylation at multiple sites increases solubility, and decreases stability by inducing proteasomal degradation. Post-translationally, O-glycosylated (O-GlcNAcylated), in a cell cycle-dependent manner.

It localises to the cytoplasm. The protein localises to the nucleus. The protein resides in the nucleoplasm. Its subcellular location is the nucleus matrix. Its function is as follows. Together with KRT19, helps to link the contractile apparatus to dystrophin at the costameres of striated muscle. The chain is Keratin, type II cytoskeletal 8 from Potorous tridactylus (Potoroo).